Consider the following 116-residue polypeptide: Somatostatin (116 aa).

A signal peptide spans 1–24 (MLSCRLQCALAALSIVLALGGVTG). Positions 25–88 (APSDPRLRQF…QDEMRLELQR (64 aa)) are excised as a propeptide. Alanine 43 carries the alanine amide modification. Residues 62–99 (QTENDALEPEDLSQAAEQDEMRLELQRSANSNPAMAPR) form a disordered region. A disulfide bridge links cysteine 105 with cysteine 116.

Belongs to the somatostatin family. Post-translationally, C-terminal amidation of the neuronostatin peptide is required for its biological activity, including for the regulation of mean arterial pressure. In terms of tissue distribution, expressed in the pancreas and the spleen (at protein level).

It localises to the secreted. In terms of biological role, inhibits the secretion of pituitary hormones, including that of growth hormone/somatotropin (GH1), PRL, ACTH, luteinizing hormone (LH) and TSH. Also impairs ghrelin- and GnRH-stimulated secretion of GH1 and LH; the inhibition of ghrelin-stimulated secretion of GH1 can be further increased by neuronostatin. Its function is as follows. May enhance low-glucose-induced glucagon release by pancreatic alpha cells. This effect may be mediated by binding to GPR107 and PKA activation. May regulate cardiac contractile function. May compromise cardiomyocyte viability. In the central nervous system, may impair memory retention and may affect hippocampal excitability. May also have anxiolytic and anorexigenic effects. May play a role in arterial pressure regulation. May inhibit basal, but not ghrelin- or GnRH-stimulated secretion of GH1 or LH, but does not affect the release of other pituitary hormones, including PRL, ACTH, FSH or TSH. Potentiates inhibitory action of somatostatin on ghrelin-stimulated secretion of GH1, but not that on GnRH-stimulated secretion of LH. In Sus scrofa (Pig), this protein is Somatostatin (SST).